An 801-amino-acid polypeptide reads, in one-letter code: Probable inorganic carbon transporter subunit DabA (801 aa).

Residues Cys-332, Asp-334, His-500, and Cys-515 each coordinate Zn(2+).

It belongs to the inorganic carbon transporter (TC 9.A.2) DabA family. In terms of assembly, forms a complex with DabB. The cofactor is Zn(2+).

The protein localises to the cell inner membrane. Functionally, part of an energy-coupled inorganic carbon pump. This Marinobacter nauticus (strain ATCC 700491 / DSM 11845 / VT8) (Marinobacter aquaeolei) protein is Probable inorganic carbon transporter subunit DabA.